Reading from the N-terminus, the 278-residue chain is S-formylglutathione hydrolase YeiG (278 aa).

Residues serine 145, aspartate 223, and histidine 256 each act as charge relay system in the active site.

This sequence belongs to the esterase D family.

The catalysed reaction is S-formylglutathione + H2O = formate + glutathione + H(+). Its function is as follows. Serine hydrolase involved in the detoxification of formaldehyde. Hydrolyzes S-formylglutathione to glutathione and formate. This chain is S-formylglutathione hydrolase YeiG (yeiG), found in Escherichia coli O6:K15:H31 (strain 536 / UPEC).